A 61-amino-acid polypeptide reads, in one-letter code: Small ribosomal subunit protein uS14B (61 aa).

Zn(2+)-binding residues include Cys-24, Cys-27, Cys-40, and Cys-43.

This sequence belongs to the universal ribosomal protein uS14 family. Zinc-binding uS14 subfamily. In terms of assembly, part of the 30S ribosomal subunit. Contacts proteins S3 and S10. Requires Zn(2+) as cofactor.

In terms of biological role, binds 16S rRNA, required for the assembly of 30S particles and may also be responsible for determining the conformation of the 16S rRNA at the A site. The polypeptide is Small ribosomal subunit protein uS14B (Ligilactobacillus salivarius (strain UCC118) (Lactobacillus salivarius)).